A 358-amino-acid polypeptide reads, in one-letter code: Uroporphyrinogen decarboxylase (358 aa).

Substrate contacts are provided by residues 29–33 (RQAGR), Phe48, Asp79, Tyr155, Ser210, and His330.

This sequence belongs to the uroporphyrinogen decarboxylase family. As to quaternary structure, homodimer.

Its subcellular location is the cytoplasm. The enzyme catalyses uroporphyrinogen III + 4 H(+) = coproporphyrinogen III + 4 CO2. The protein operates within porphyrin-containing compound metabolism; protoporphyrin-IX biosynthesis; coproporphyrinogen-III from 5-aminolevulinate: step 4/4. Functionally, catalyzes the decarboxylation of four acetate groups of uroporphyrinogen-III to yield coproporphyrinogen-III. This chain is Uroporphyrinogen decarboxylase, found in Bordetella bronchiseptica (strain ATCC BAA-588 / NCTC 13252 / RB50) (Alcaligenes bronchisepticus).